Reading from the N-terminus, the 122-residue chain is Urease subunit beta (122 aa).

The interval 92–122 (GLRPEYAGELDGRGHEPTAPNYGEKGQGHFE) is disordered.

It belongs to the urease beta subunit family. In terms of assembly, heterotrimer of UreA (gamma), UreB (beta) and UreC (alpha) subunits. Three heterotrimers associate to form the active enzyme.

It is found in the cytoplasm. The enzyme catalyses urea + 2 H2O + H(+) = hydrogencarbonate + 2 NH4(+). Its pathway is nitrogen metabolism; urea degradation; CO(2) and NH(3) from urea (urease route): step 1/1. This chain is Urease subunit beta, found in Saccharopolyspora erythraea (strain ATCC 11635 / DSM 40517 / JCM 4748 / NBRC 13426 / NCIMB 8594 / NRRL 2338).